A 256-amino-acid polypeptide reads, in one-letter code: Triosephosphate isomerase (256 aa).

Position 10–12 (10–12 (NWK)) interacts with substrate. The active-site Electrophile is H97. Catalysis depends on E169, which acts as the Proton acceptor. Substrate-binding positions include G175, S214, and 235-236 (GG).

It belongs to the triosephosphate isomerase family. Homodimer.

The protein localises to the cytoplasm. The enzyme catalyses D-glyceraldehyde 3-phosphate = dihydroxyacetone phosphate. Its pathway is carbohydrate biosynthesis; gluconeogenesis. The protein operates within carbohydrate degradation; glycolysis; D-glyceraldehyde 3-phosphate from glycerone phosphate: step 1/1. Functionally, involved in the gluconeogenesis. Catalyzes stereospecifically the conversion of dihydroxyacetone phosphate (DHAP) to D-glyceraldehyde-3-phosphate (G3P). This Haemophilus ducreyi (strain 35000HP / ATCC 700724) protein is Triosephosphate isomerase.